The primary structure comprises 477 residues: UDP-N-acetylmuramate--L-alanine ligase (477 aa).

122-128 (GTHGKTT) contributes to the ATP binding site.

The protein belongs to the MurCDEF family.

It localises to the cytoplasm. It carries out the reaction UDP-N-acetyl-alpha-D-muramate + L-alanine + ATP = UDP-N-acetyl-alpha-D-muramoyl-L-alanine + ADP + phosphate + H(+). Its pathway is cell wall biogenesis; peptidoglycan biosynthesis. In terms of biological role, cell wall formation. The chain is UDP-N-acetylmuramate--L-alanine ligase from Xanthomonas axonopodis pv. citri (strain 306).